A 362-amino-acid chain; its full sequence is Phosphoserine aminotransferase (362 aa).

R42 provides a ligand contact to L-glutamate. Residues 76–77 (AR), W102, T153, D174, and Q197 each bind pyridoxal 5'-phosphate. K198 is subject to N6-(pyridoxal phosphate)lysine. 239 to 240 (NT) is a pyridoxal 5'-phosphate binding site.

This sequence belongs to the class-V pyridoxal-phosphate-dependent aminotransferase family. SerC subfamily. Homodimer. The cofactor is pyridoxal 5'-phosphate.

It is found in the cytoplasm. It carries out the reaction O-phospho-L-serine + 2-oxoglutarate = 3-phosphooxypyruvate + L-glutamate. The enzyme catalyses 4-(phosphooxy)-L-threonine + 2-oxoglutarate = (R)-3-hydroxy-2-oxo-4-phosphooxybutanoate + L-glutamate. It participates in amino-acid biosynthesis; L-serine biosynthesis; L-serine from 3-phospho-D-glycerate: step 2/3. It functions in the pathway cofactor biosynthesis; pyridoxine 5'-phosphate biosynthesis; pyridoxine 5'-phosphate from D-erythrose 4-phosphate: step 3/5. Its function is as follows. Catalyzes the reversible conversion of 3-phosphohydroxypyruvate to phosphoserine and of 3-hydroxy-2-oxo-4-phosphonooxybutanoate to phosphohydroxythreonine. The chain is Phosphoserine aminotransferase from Xenorhabdus nematophila (strain ATCC 19061 / DSM 3370 / CCUG 14189 / LMG 1036 / NCIMB 9965 / AN6).